Consider the following 540-residue polypeptide: Light-independent protochlorophyllide reductase subunit B (540 aa).

Asp-36 provides a ligand contact to [4Fe-4S] cluster. Catalysis depends on Asp-287, which acts as the Proton donor. 422–423 (GL) contacts substrate.

It belongs to the ChlB/BchB/BchZ family. As to quaternary structure, protochlorophyllide reductase is composed of three subunits; BchL, BchN and BchB. Forms a heterotetramer of two BchB and two BchN subunits. [4Fe-4S] cluster serves as cofactor.

It catalyses the reaction chlorophyllide a + oxidized 2[4Fe-4S]-[ferredoxin] + 2 ADP + 2 phosphate = protochlorophyllide a + reduced 2[4Fe-4S]-[ferredoxin] + 2 ATP + 2 H2O. Its pathway is porphyrin-containing compound metabolism; bacteriochlorophyll biosynthesis (light-independent). In terms of biological role, component of the dark-operative protochlorophyllide reductase (DPOR) that uses Mg-ATP and reduced ferredoxin to reduce ring D of protochlorophyllide (Pchlide) to form chlorophyllide a (Chlide). This reaction is light-independent. The NB-protein (BchN-BchB) is the catalytic component of the complex. This chain is Light-independent protochlorophyllide reductase subunit B, found in Rhodopseudomonas palustris (strain TIE-1).